Reading from the N-terminus, the 450-residue chain is UDP-N-acetylmuramoylalanine--D-glutamate ligase (450 aa).

119 to 125 contacts ATP; the sequence is GSNGKTT.

This sequence belongs to the MurCDEF family.

Its subcellular location is the cytoplasm. It catalyses the reaction UDP-N-acetyl-alpha-D-muramoyl-L-alanine + D-glutamate + ATP = UDP-N-acetyl-alpha-D-muramoyl-L-alanyl-D-glutamate + ADP + phosphate + H(+). It functions in the pathway cell wall biogenesis; peptidoglycan biosynthesis. Its function is as follows. Cell wall formation. Catalyzes the addition of glutamate to the nucleotide precursor UDP-N-acetylmuramoyl-L-alanine (UMA). In Streptococcus pneumoniae serotype 4 (strain ATCC BAA-334 / TIGR4), this protein is UDP-N-acetylmuramoylalanine--D-glutamate ligase.